Consider the following 297-residue polypeptide: Acetaldehyde dehydrogenase (297 aa).

Cysteine 128 acts as the Acyl-thioester intermediate in catalysis. Residues serine 159 to asparagine 167 and asparagine 272 contribute to the NAD(+) site.

The protein belongs to the acetaldehyde dehydrogenase family.

The catalysed reaction is acetaldehyde + NAD(+) + CoA = acetyl-CoA + NADH + H(+). In Desulfitobacterium hafniense (strain DSM 10664 / DCB-2), this protein is Acetaldehyde dehydrogenase.